We begin with the raw amino-acid sequence, 522 residues long: Peptide chain release factor 3 (522 aa).

One can recognise a tr-type G domain in the interval 10–277 (ASRKTFAIIS…TFVDFAPAPS (268 aa)). GTP-binding positions include 19–26 (SHPDAGKT), 87–91 (DTPGH), and 141–144 (NKMD).

It belongs to the TRAFAC class translation factor GTPase superfamily. Classic translation factor GTPase family. PrfC subfamily.

It is found in the cytoplasm. Its function is as follows. Increases the formation of ribosomal termination complexes and stimulates activities of RF-1 and RF-2. It binds guanine nucleotides and has strong preference for UGA stop codons. It may interact directly with the ribosome. The stimulation of RF-1 and RF-2 is significantly reduced by GTP and GDP, but not by GMP. This Listeria monocytogenes serovar 1/2a (strain ATCC BAA-679 / EGD-e) protein is Peptide chain release factor 3.